The primary structure comprises 333 residues: Fructose-1,6-bisphosphatase class 1 (333 aa).

Residues E92, D113, L115, and D116 each contribute to the Mg(2+) site. Substrate contacts are provided by residues 116–119 (DGSS), N209, Y242, and K272. E278 serves as a coordination point for Mg(2+).

Belongs to the FBPase class 1 family. Homotetramer. Mg(2+) serves as cofactor.

Its subcellular location is the cytoplasm. The enzyme catalyses beta-D-fructose 1,6-bisphosphate + H2O = beta-D-fructose 6-phosphate + phosphate. The protein operates within carbohydrate biosynthesis; Calvin cycle. The protein is Fructose-1,6-bisphosphatase class 1 of Chlorobium phaeobacteroides (strain BS1).